Reading from the N-terminus, the 437-residue chain is O-antigen export system ATP-binding protein RfbB (437 aa).

The ABC transporter domain maps to 37–256 (LRGKRQSRDA…YREAISLAEA (220 aa)). 69 to 76 (GRNGSGKS) is a binding site for ATP.

The protein belongs to the ABC transporter superfamily.

It localises to the cell inner membrane. May form an ATP-driven O-antigen export apparatus, in association with RfbA. This Myxococcus xanthus protein is O-antigen export system ATP-binding protein RfbB (rfbB).